Reading from the N-terminus, the 811-residue chain is Metal transporter cnnm-1 (811 aa).

A signal peptide spans 1 to 24 (MSASCLRLLTLSLFILGQCNVTAA). Asparagine 20, asparagine 49, asparagine 61, and asparagine 122 each carry an N-linked (GlcNAc...) asparagine glycan. Residues 25 to 204 (QNGVDDEVTT…KEYFLPLPLQ (180 aa)) are Extracellular-facing. Positions 197–376 (YFLPLPLQIA…TDNGQVSNEL (180 aa)) constitute a CNNM transmembrane domain. Residues 205–225 (IACIGFLLCLSALFSGLTLGL) form a helical membrane-spanning segment. Residues 226–259 (MSLTPQELELVIKSGAIKEQKCAAKILPVRKKGN) lie on the Cytoplasmic side of the membrane. A helical transmembrane segment spans residues 260-280 (LLLCSLLLGNVIVNSAISILM). The Extracellular segment spans residues 281-284 (GELT). A helical transmembrane segment spans residues 285–305 (TGIYALIGSTMGIVIFGEILP). Residues 306–315 (QSICVKKGLE) are Cytoplasmic-facing. Residues 316 to 336 (VGAHTISITQLFIFLTFPIAW) form a helical membrane-spanning segment. Over 337–811 (PVSKLLDCLL…EEEMALLDQP (475 aa)) the chain is Extracellular. 2 CBS domains span residues 394 to 456 (MTKI…NFTV) and 462 to 530 (YHKH…INDE). 2 N-linked (GlcNAc...) asparagine glycosylation sites follow: asparagine 435 and asparagine 453. The tract at residues 741–760 (DVSHNSSAHNSNLSLVEKPG) is disordered. Positions 743-755 (SHNSSAHNSNLSL) are enriched in low complexity. N-linked (GlcNAc...) asparagine glycosylation is found at asparagine 745 and asparagine 752.

It belongs to the ACDP family. Highly expressed in the intestine and in neurons, but it is also expressed in a variety of tissues including the pharynx, hypodermis, rectum and in muscles.

Its subcellular location is the basolateral cell membrane. Functionally, probable metal transporter. Probably acts redundantly with the other metal transport proteins cnnm-2, cnnm-3, cnnm-4 and cnnm-5 to regulate Mg(2+) homeostasis. Promotes postembryonic gonad development by regulating Mg(2+) levels, probably via AMPK signaling. The sequence is that of Metal transporter cnnm-1 from Caenorhabditis elegans.